The following is a 231-amino-acid chain: Large ribosomal subunit protein uL1 (231 aa).

It belongs to the universal ribosomal protein uL1 family. In terms of assembly, part of the 50S ribosomal subunit.

In terms of biological role, binds directly to 23S rRNA. The L1 stalk is quite mobile in the ribosome, and is involved in E site tRNA release. Functionally, protein L1 is also a translational repressor protein, it controls the translation of the L11 operon by binding to its mRNA. The sequence is that of Large ribosomal subunit protein uL1 from Beijerinckia indica subsp. indica (strain ATCC 9039 / DSM 1715 / NCIMB 8712).